The following is a 201-amino-acid chain: Recombination protein RecR (201 aa).

Residues 60-75 form a C4-type zinc finger; that stretch reads CKTCGNIDTQNPCTVC. The Toprim domain maps to 83 to 178; it reads SIIVVVADVA…KVTRLAHGVP (96 aa).

It belongs to the RecR family.

May play a role in DNA repair. It seems to be involved in an RecBC-independent recombinational process of DNA repair. It may act with RecF and RecO. The protein is Recombination protein RecR of Rhodopseudomonas palustris (strain HaA2).